The primary structure comprises 321 residues: Tyrosine recombinase XerC (321 aa).

Positions 16-107 (SDIGQQIVRW…GLRSFARFLE (92 aa)) constitute a Core-binding (CB) domain. Positions 128-315 (SVPKPIHMSA…DSERLLDVYR (188 aa)) constitute a Tyr recombinase domain. Residues Arg-173, Lys-199, His-267, Arg-270, and His-293 contribute to the active site. The O-(3'-phospho-DNA)-tyrosine intermediate role is filled by Tyr-302.

The protein belongs to the 'phage' integrase family. XerC subfamily. As to quaternary structure, forms a cyclic heterotetrameric complex composed of two molecules of XerC and two molecules of XerD.

The protein resides in the cytoplasm. Functionally, site-specific tyrosine recombinase, which acts by catalyzing the cutting and rejoining of the recombining DNA molecules. The XerC-XerD complex is essential to convert dimers of the bacterial chromosome into monomers to permit their segregation at cell division. It also contributes to the segregational stability of plasmids. The polypeptide is Tyrosine recombinase XerC (Nitrobacter winogradskyi (strain ATCC 25391 / DSM 10237 / CIP 104748 / NCIMB 11846 / Nb-255)).